The sequence spans 21 residues: Nigrocin-2JDa (21 aa).

A disulfide bridge connects residues Cys-15 and Cys-21.

As to expression, expressed by the skin glands.

The protein resides in the secreted. Has antibacterial activity against E.coli ATCC 25992 (MIC=16 uM), E.coli CIB 84492 (MIC=16 uM), S.aureus ATCC 25923 (MIC=16 uM) and S.aureus CIB 85462 (MIC=8 uM). Has antifungal activity against C.albicans (MIC=63 uM). Has hemolytic activity against rabbit erythrocytes. This Odorrana jingdongensis (Jingdong frog) protein is Nigrocin-2JDa.